The primary structure comprises 383 residues: 3-phytase (383 aa).

The signal sequence occupies residues 1 to 26 (MNHSKTLLLTAAAGLMLTCGAVSSQA). A propeptide spanning residues 27 to 30 (KHKL) is cleaved from the precursor. Residues 31–362 (SDPYHFTVNA…VPWERIADKI (332 aa)) form the BPP domain. Residues 364–383 (FHPQVNKQVDPRKMTDRSGK) form a disordered region. Residues 372–383 (VDPRKMTDRSGK) show a composition bias toward basic and acidic residues.

The protein localises to the secreted. It carries out the reaction 1D-myo-inositol hexakisphosphate + H2O = 1D-myo-inositol 1,2,4,5,6-pentakisphosphate + phosphate. The protein is 3-phytase (phy) of Bacillus sp. (strain DS11).